The chain runs to 431 residues: Glucose-1-phosphate adenylyltransferase (431 aa).

Residue lysine 39 participates in beta-D-fructose 1,6-bisphosphate binding. The AMP site is built by arginine 40, histidine 46, and arginine 52. Tyrosine 114 lines the alpha-D-glucose 1-phosphate pocket. Arginine 130 lines the AMP pocket. Residues glycine 179, glutamate 194–lysine 195, and serine 212 contribute to the alpha-D-glucose 1-phosphate site. Residue arginine 386 coordinates AMP. Beta-D-fructose 1,6-bisphosphate-binding positions include arginine 419 to arginine 423 and glutamine 429 to arginine 431.

Belongs to the bacterial/plant glucose-1-phosphate adenylyltransferase family. As to quaternary structure, homotetramer.

It carries out the reaction alpha-D-glucose 1-phosphate + ATP + H(+) = ADP-alpha-D-glucose + diphosphate. The protein operates within glycan biosynthesis; glycogen biosynthesis. Allosterically activated by fructose-1,6-bisphosphate (F16BP) and inhibited by AMP. Functionally, involved in the biosynthesis of ADP-glucose, a building block required for the elongation reactions to produce glycogen. Catalyzes the reaction between ATP and alpha-D-glucose 1-phosphate (G1P) to produce pyrophosphate and ADP-Glc. The sequence is that of Glucose-1-phosphate adenylyltransferase from Enterobacter sp. (strain 638).